The following is a 295-amino-acid chain: Virginiamycin B lyase (295 aa).

His-227 is a binding site for substrate. Glu-267 is a binding site for Mg(2+). Residue His-269 is the Proton acceptor of the active site. A Mg(2+)-binding site is contributed by Glu-284.

The protein belongs to the Vgb family. In terms of assembly, monomer. It depends on Mg(2+) as a cofactor.

In terms of biological role, inactivates the type B streptogramin antibiotics by linearizing the lactone ring at the ester linkage, generating a free phenylglycine carboxylate and converting the threonyl moiety into 2-amino-butenoic acid. The chain is Virginiamycin B lyase from Bacillus licheniformis (strain ATCC 14580 / DSM 13 / JCM 2505 / CCUG 7422 / NBRC 12200 / NCIMB 9375 / NCTC 10341 / NRRL NRS-1264 / Gibson 46).